The chain runs to 290 residues: ATP synthase gamma chain (290 aa).

This sequence belongs to the ATPase gamma chain family. F-type ATPases have 2 components, CF(1) - the catalytic core - and CF(0) - the membrane proton channel. CF(1) has five subunits: alpha(3), beta(3), gamma(1), delta(1), epsilon(1). CF(0) has three main subunits: a, b and c.

Its subcellular location is the cell inner membrane. Produces ATP from ADP in the presence of a proton gradient across the membrane. The gamma chain is believed to be important in regulating ATPase activity and the flow of protons through the CF(0) complex. This chain is ATP synthase gamma chain, found in Chlorobium luteolum (strain DSM 273 / BCRC 81028 / 2530) (Pelodictyon luteolum).